Here is a 346-residue protein sequence, read N- to C-terminus: Dimethylallyltranstransferase (346 aa).

Lys-96, Arg-99, and His-128 together coordinate isopentenyl diphosphate. Positions 135 and 141 each coordinate Mg(2+). Isopentenyl diphosphate is bound at residue Arg-147.

It belongs to the FPP/GGPP synthase family. Mg(2+) serves as cofactor.

The catalysed reaction is isopentenyl diphosphate + dimethylallyl diphosphate = (2E)-geranyl diphosphate + diphosphate. The protein operates within isoprenoid biosynthesis; geranyl diphosphate biosynthesis; geranyl diphosphate from dimethylallyl diphosphate and isopentenyl diphosphate: step 1/1. In terms of biological role, prenyltransferase involved in the biosynthesis of ambiguines, a family of hapalindole-type alkaloids. Catalyzes the addition of isopentenyl diphosphate (IPP) onto dimethylallyl diphosphate (DMAPP) to form geranyl pyrophosphate (GPP). Cannot use farnesyl diphosphate (FPP) or geranylgeranyl diphosphate (GGPP). The polypeptide is Dimethylallyltranstransferase (Fischerella ambigua (strain UTEX 1903)).